The sequence spans 625 residues: Inactive glucose-6-phosphate 1-dehydrogenase 4, chloroplastic (625 aa).

The transit peptide at 1-49 (MSLSSCLLPFSQSATAPSSSVCSCHLAASFSNFPVSSRDYSFSRSGSLV) directs the protein to the chloroplast. Residues 160 to 167 (GATGELAR) and Arg-194 contribute to the NADP(+) site. Cys-212 and Cys-220 form a disulfide bridge. Lys-297 is a binding site for NADP(+). D-glucose 6-phosphate-binding positions include Lys-297, 327-331 (HMLGR), Glu-365, and Asp-382. Catalysis depends on His-387, which acts as the Proton acceptor. Arg-471, Arg-480, Arg-513, and Arg-606 together coordinate NADP(+).

It belongs to the glucose-6-phosphate dehydrogenase family. In terms of assembly, forms homodimer. Interacts with G6PD1. In terms of tissue distribution, expressed in leaves, stems and buds.

It is found in the plastid. The protein resides in the chloroplast stroma. In terms of biological role, seems to be a catalytically inactive enzyme. This is Inactive glucose-6-phosphate 1-dehydrogenase 4, chloroplastic from Arabidopsis thaliana (Mouse-ear cress).